The following is a 297-amino-acid chain: Probable endonuclease 4 (297 aa).

A disordered region spans residues 1 to 21; sequence MPEIGAHVSAAGGPQRAPERG. The Zn(2+) site is built by H67, H107, E145, D179, H182, H216, D229, H231, and E261.

Belongs to the AP endonuclease 2 family. Requires Zn(2+) as cofactor.

It carries out the reaction Endonucleolytic cleavage to 5'-phosphooligonucleotide end-products.. Endonuclease IV plays a role in DNA repair. It cleaves phosphodiester bonds at apurinic or apyrimidinic (AP) sites, generating a 3'-hydroxyl group and a 5'-terminal sugar phosphate. This chain is Probable endonuclease 4, found in Halorhodospira halophila (strain DSM 244 / SL1) (Ectothiorhodospira halophila (strain DSM 244 / SL1)).